Consider the following 212-residue polypeptide: F420-dependent NADP reductase (212 aa).

Residues 9–12 (TGNL), 31–32 (SR), K36, I72, H76, V98, and A137 contribute to the NADP(+) site. Residue L207 participates in coenzyme F420-(gamma-Glu)n binding.

Belongs to the F420-dependent NADP reductase family. Homodimer.

The catalysed reaction is reduced coenzyme F420-(gamma-L-Glu)(n) + NADP(+) = oxidized coenzyme F420-(gamma-L-Glu)(n) + NADPH + 2 H(+). Catalyzes the reversible reduction of NADP(+) by F420H(2). In this reaction the proS hydrogen at C5 of F420 is transferred into the proS position at C4 of NADPH. The polypeptide is F420-dependent NADP reductase (fno) (Archaeoglobus fulgidus (strain ATCC 49558 / DSM 4304 / JCM 9628 / NBRC 100126 / VC-16)).